Consider the following 632-residue polypeptide: ATP-dependent zinc metalloprotease FtsH (632 aa).

Residues 1-9 are Cytoplasmic-facing; sequence MKPTNEPKK. A helical transmembrane segment spans residues 10–30; that stretch reads PFFQSPIILAVLGGILLIFFL. The Periplasmic segment spans residues 31 to 116; sequence RSFNSDGSFS…INYSGFSESN (86 aa). Residues 117-137 traverse the membrane as a helical segment; the sequence is FFTDMLGWLMPILVILGLWMF. At 138 to 632 the chain is on the cytoplasmic side; the sequence is MANRMQKNMG…RLIPLEEQAS (495 aa). ATP contacts are provided by residues alanine 173, 213-217, and histidine 354; that span reads GTGKT. Zn(2+) is bound at residue histidine 434. The active site involves glutamate 435. Zn(2+)-binding residues include histidine 438 and aspartate 511.

The protein in the central section; belongs to the AAA ATPase family. In the C-terminal section; belongs to the peptidase M41 family. In terms of assembly, homohexamer. The cofactor is Zn(2+).

It is found in the cell inner membrane. Its function is as follows. Acts as a processive, ATP-dependent zinc metallopeptidase for both cytoplasmic and membrane proteins. Plays a role in the quality control of integral membrane proteins. The sequence is that of ATP-dependent zinc metalloprotease FtsH from Helicobacter pylori (strain ATCC 700392 / 26695) (Campylobacter pylori).